We begin with the raw amino-acid sequence, 176 residues long: ATP synthase subunit delta (176 aa).

It belongs to the ATPase delta chain family. In terms of assembly, F-type ATPases have 2 components, F(1) - the catalytic core - and F(0) - the membrane proton channel. F(1) has five subunits: alpha(3), beta(3), gamma(1), delta(1), epsilon(1). F(0) has three main subunits: a(1), b(2) and c(10-14). The alpha and beta chains form an alternating ring which encloses part of the gamma chain. F(1) is attached to F(0) by a central stalk formed by the gamma and epsilon chains, while a peripheral stalk is formed by the delta and b chains.

Its subcellular location is the cell membrane. Functionally, f(1)F(0) ATP synthase produces ATP from ADP in the presence of a proton or sodium gradient. F-type ATPases consist of two structural domains, F(1) containing the extramembraneous catalytic core and F(0) containing the membrane proton channel, linked together by a central stalk and a peripheral stalk. During catalysis, ATP synthesis in the catalytic domain of F(1) is coupled via a rotary mechanism of the central stalk subunits to proton translocation. In terms of biological role, this protein is part of the stalk that links CF(0) to CF(1). It either transmits conformational changes from CF(0) to CF(1) or is implicated in proton conduction. This is ATP synthase subunit delta from Wigglesworthia glossinidia brevipalpis.